A 668-amino-acid chain; its full sequence is Threonine--tRNA ligase (668 aa).

A TGS domain is found at Met1–Arg64. The tract at residues Asp245–Pro553 is catalytic. The Zn(2+) site is built by Cys347, His398, and His530.

Belongs to the class-II aminoacyl-tRNA synthetase family. In terms of assembly, homodimer. It depends on Zn(2+) as a cofactor.

The protein resides in the cytoplasm. The enzyme catalyses tRNA(Thr) + L-threonine + ATP = L-threonyl-tRNA(Thr) + AMP + diphosphate + H(+). In terms of biological role, catalyzes the attachment of threonine to tRNA(Thr) in a two-step reaction: L-threonine is first activated by ATP to form Thr-AMP and then transferred to the acceptor end of tRNA(Thr). Also edits incorrectly charged L-seryl-tRNA(Thr). This is Threonine--tRNA ligase from Rhizobium leguminosarum bv. trifolii (strain WSM2304).